The chain runs to 365 residues: 3-isopropylmalate dehydrogenase (365 aa).

Residue 80–91 (GPKWGTGSVRPE) coordinates NAD(+). Substrate-binding residues include Arg-98, Arg-108, Arg-137, and Asp-226. Residues Asp-226, Asp-251, and Asp-255 each contribute to the Mg(2+) site. Residue 290-301 (GSAPDLPKGKVN) participates in NAD(+) binding.

This sequence belongs to the isocitrate and isopropylmalate dehydrogenases family. Homodimer. The cofactor is Mg(2+). Requires Mn(2+) as cofactor.

It is found in the cytoplasm. It catalyses the reaction (2R,3S)-3-isopropylmalate + NAD(+) = 4-methyl-2-oxopentanoate + CO2 + NADH. It participates in amino-acid biosynthesis; L-leucine biosynthesis; L-leucine from 3-methyl-2-oxobutanoate: step 3/4. Functionally, catalyzes the oxidation of 3-carboxy-2-hydroxy-4-methylpentanoate (3-isopropylmalate) to 3-carboxy-4-methyl-2-oxopentanoate. The product decarboxylates to 4-methyl-2 oxopentanoate. The sequence is that of 3-isopropylmalate dehydrogenase (LEU2) from Maudiozyma exigua (Yeast).